The chain runs to 921 residues: Isoleucine--tRNA ligase 1 (921 aa).

Residues 57 to 67 carry the 'HIGH' region motif; the sequence is PYANGDIHMGH. Glu552 is a binding site for L-isoleucyl-5'-AMP. The 'KMSKS' region motif lies at 593–597; that stretch reads KMSKS. Lys596 contributes to the ATP binding site. Cys888, Cys891, Cys908, and Cys911 together coordinate Zn(2+).

The protein belongs to the class-I aminoacyl-tRNA synthetase family. IleS type 1 subfamily. In terms of assembly, monomer. The cofactor is Zn(2+).

Its subcellular location is the cytoplasm. The enzyme catalyses tRNA(Ile) + L-isoleucine + ATP = L-isoleucyl-tRNA(Ile) + AMP + diphosphate. Its function is as follows. Catalyzes the attachment of isoleucine to tRNA(Ile). As IleRS can inadvertently accommodate and process structurally similar amino acids such as valine, to avoid such errors it has two additional distinct tRNA(Ile)-dependent editing activities. One activity is designated as 'pretransfer' editing and involves the hydrolysis of activated Val-AMP. The other activity is designated 'posttransfer' editing and involves deacylation of mischarged Val-tRNA(Ile). The chain is Isoleucine--tRNA ligase 1 from Bacillus cereus (strain ATCC 10987 / NRS 248).